The sequence spans 201 residues: TATA-box-binding protein 2 (201 aa).

2 repeat units span residues 26–102 (LQNI…ARII) and 116–193 (IQNI…YPVL).

The protein belongs to the TBP family. In terms of assembly, belongs to the TFIID complex together with the TBP-associated factors (TAFs). Binds DNA as monomer.

It localises to the nucleus. Functionally, general transcription factor that functions at the core of the DNA-binding multiprotein factor TFIID. Binding of TFIID to the TATA box is the initial transcriptional step of the pre-initiation complex (PIC), playing a role in the activation of eukaryotic genes transcribed by RNA polymerase II. In Triticum aestivum (Wheat), this protein is TATA-box-binding protein 2 (TBP2).